A 146-amino-acid chain; its full sequence is 3-dehydroquinate dehydratase (146 aa).

Y23 acts as the Proton acceptor in catalysis. Residues N74, H80, and D87 each contribute to the substrate site. The Proton donor role is filled by H100. Residues 101-102 (IS) and R111 each bind substrate.

It belongs to the type-II 3-dehydroquinase family. Homododecamer.

The catalysed reaction is 3-dehydroquinate = 3-dehydroshikimate + H2O. It functions in the pathway metabolic intermediate biosynthesis; chorismate biosynthesis; chorismate from D-erythrose 4-phosphate and phosphoenolpyruvate: step 3/7. In terms of biological role, catalyzes a trans-dehydration via an enolate intermediate. This is 3-dehydroquinate dehydratase from Bacillus cereus (strain G9842).